A 763-amino-acid polypeptide reads, in one-letter code: MAATGTAAAAATGRLLLLLLVGLTAPALALAGYIEALAANAGTGFAVAEPQIAMFCGKLNMHVNIQTGKWEPDPTGTKSCFETKEEVLQYCQEMYPELQITNVMEANQRVSIDNWCRRDKKQCKSRFVTPFKCLVGEFVSDVLLVPEKCQFFHKERMEVCENHQHWHTVVKEACLTQGMTLYSYGMLLPCGVDQFHGTEYVCCPQTKIIGSVSKEEEEEDEEEEEEEDEEEDYDVYKSEFPTEADLEDFTEAAVDEDDEDEEEGEEVVEDRDYYYDTFKGDDYNEENPTEPGSDGTMSDKEITHDVKAVCSQEAMTGPCRAVMPRWYFDLSKGKCVRFIYGGCGGNRNNFESEDYCMAVCKAMIPPTPLPTNDVDVYFETSADDNEHARFQKAKEQLEIRHRNRMDRVKKEWEEAELQAKNLPKAERQTLIQHFQAMVKALEKEAASEKQQLVETHLARVEAMLNDRRRMALENYLAALQSDPPRPHRILQALRRYVRAENKDRLHTIRHYQHVLAVDPEKAAQMKSQVMTHLHVIEERRNQSLSLLYKVPYVAQEIQEEIDELLQEQRADMDQFTASISETPVDVRVSSEESEEIPPFHPFHPFPALPENEDTQPELYHPMKKGSGVGEQDGGLIGAEEKVINSKNKVDENMVIDETLDVKEMIFNAERVGGLEEERESVGPLREDFSLSSSALIGLLVIAVAIATVIVISLVMLRKRQYGTISHGIVEVDPMLTPEERHLNKMQNHGYENPTYKYLEQMQI.

The N-terminal stretch at Met1 to Ala31 is a signal peptide. Topologically, residues Gly32–Ser692 are extracellular. The segment at Ala46 to Val139 is GFLD subdomain. The E1 domain occupies Ala46–Gln205. Disulfide bonds link Cys56–Cys80, Cys91–Cys133, Cys116–Cys123, Cys149–Cys203, Cys160–Cys190, and Cys174–Cys202. Positions Glu147–Gln205 are cuBD subdomain. Cu cation is bound by residues His163, His167, and Tyr184. Positions Ser211 to Asp299 are disordered. Composition is skewed to acidic residues over residues Glu215–Tyr233 and Thr242–Glu269. Residues Asp270 to Asp282 are compositionally biased toward basic and acidic residues. Residues Val306–Ile364 enclose the BPTI/Kunitz inhibitor domain. 3 disulfide bridges follow: Cys310–Cys360, Cys319–Cys343, and Cys335–Cys356. Residues Asp373–Leu564 form the E2 domain. Ser590 carries the post-translational modification Phosphoserine; by FAM20C. An O-linked (Xyl...) (chondroitin sulfate) serine glycan is attached at Ser626. The chain crosses the membrane as a helical span at residues Ser693 to Leu716. The Cytoplasmic portion of the chain corresponds to Arg717–Ile763. The interval Gly749–Ile763 is interaction with DAB2. Residues Tyr750 to Tyr755 carry the NPXY motif motif.

Belongs to the APP family. In terms of assembly, interacts with CPEB1. Interacts (via NPXY motif) with DAB2 (via PID domain); the interaction is impaired by tyrosine phosphorylation of the NPXY motif. Interacts (via cytoplasmic domain) with APBB2/FE65L. Interacts (via intracellular domain) with APBB3/FE65L2. In terms of processing, the BPTI/Kunitz inhibitor domain is O-glycosylated. Expressed in placenta, brain, heart, lung, liver, kidney and endothelial tissues.

The protein localises to the cell membrane. It is found in the nucleus. Its function is as follows. May play a role in the regulation of hemostasis. The soluble form may have inhibitory properties towards coagulation factors. May interact with cellular G-protein signaling pathways. May bind to the DNA 5'-GTCACATG-3'(CDEI box). Inhibits trypsin, chymotrypsin, plasmin, factor XIA and plasma and glandular kallikrein. Modulates the Cu/Zn nitric oxide-catalyzed autodegradation of GPC1 heparan sulfate side chains in fibroblasts. The protein is Amyloid beta precursor like protein 2 of Homo sapiens (Human).